A 656-amino-acid chain; its full sequence is Cyclic AMP-dependent transcription factor ATF-6 alpha (656 aa).

The interval 1–137 (MESPFSPVLP…SPSSAEPLKE (137 aa)) is transcription activation. K75 is covalently cross-linked (Glycyl lysine isopeptide (Lys-Gly) (interchain with G-Cter in SUMO2)). 2 stretches are compositionally biased toward low complexity: residues 81 to 101 (LSPA…SCSS) and 111 to 121 (LLSSSQSPLSL). The interval 81-171 (LSPASSSCSV…SKPSVQPKPL (91 aa)) is disordered. K139 is covalently cross-linked (Glycyl lysine isopeptide (Lys-Gly) (interchain with G-Cter in ubiquitin)). Positions 293–356 (VLRRQQRMIK…DQVVSENQRL (64 aa)) constitute a bZIP domain. The interval 295–326 (RRQQRMIKNRESACQSRKKKKEYMLGLEARLK) is basic motif. Residues 335 to 342 (LKKENGSL) form a leucine-zipper region. Residues 378–398 (NYGPMSMLEQDSRRVKPSVSP) traverse the membrane as a helical; Signal-anchor for type II membrane protein segment. Residues 399 to 656 (ANQRRHLLEF…VVSTLPESVQ (258 aa)) are Lumenal-facing. Residues 455–575 (QPLINTTESL…ATTHNKTTRP (121 aa)) form an interaction with THBS4 region. N-linked (GlcNAc...) asparagine glycosylation is found at N459, N570, and N629. The disordered stretch occupies residues 632-656 (STFFGSPPTATETTHVVSTLPESVQ).

It belongs to the bZIP family. ATF subfamily. Interacts with XBP1 isoform 2; the interaction occurs in a ER stress-dependent manner. Interacts with LACC1. In terms of assembly, interacts with THBS4 (via EGF-like 3; calcium-binding domain) which facilitates its processing, activation and nuclear translocation. Interacts (via lumenal domain) with THBS1. As to quaternary structure, homodimer and heterodimer with ATF6-beta. The dimer interacts with the nuclear transcription factor Y (NF-Y) trimer through direct binding to NF-Y subunit C (NF-YC). Also interacts with the transcription factors GTF2I, YY1 and SRF. In terms of processing, during unfolded protein response, a fragment of approximately 50 kDa containing the cytoplasmic transcription factor domain is released by proteolysis. The cleavage seems to be performed sequentially by site-1 (MBTPS1, S1P) and site-2 (MBTPS2, S2P) proteases. N-glycosylated; in its luminal domain. The glycosylation status may serve as a sensor for ER homeostasis, resulting in ATF6 activation to trigger the unfolded protein response (UPR). Post-translationally, ubiquitinated by RNF186 at Lys-139, which is required for pattern recognition receptor-induced unfolded protein response-associated outcomes.

It is found in the endoplasmic reticulum membrane. The protein localises to the golgi apparatus membrane. The protein resides in the nucleus. Precursor of the transcription factor form (Processed cyclic AMP-dependent transcription factor ATF-6 alpha), which is embedded in the endoplasmic reticulum membrane. Endoplasmic reticulum stress promotes processing of this form, releasing the transcription factor form that translocates into the nucleus, where it activates transcription of genes involved in the unfolded protein response (UPR). In terms of biological role, transcription factor that initiates the unfolded protein response (UPR) during endoplasmic reticulum stress by activating transcription of genes involved in the UPR. Binds DNA on the 5'-CCAC[GA]-3'half of the ER stress response element (ERSE) (5'-CCAAT-N(9)-CCAC[GA]-3') and of ERSE II (5'-ATTGG-N-CCACG-3'). Binding to ERSE requires binding of NF-Y to ERSE. Could also be involved in activation of transcription by the serum response factor. May play a role in foveal development and cone function in the retina. This chain is Cyclic AMP-dependent transcription factor ATF-6 alpha (Atf6), found in Rattus norvegicus (Rat).